The primary structure comprises 452 residues: Exodeoxyribonuclease 7 large subunit (452 aa).

The protein belongs to the XseA family. As to quaternary structure, heterooligomer composed of large and small subunits.

Its subcellular location is the cytoplasm. The enzyme catalyses Exonucleolytic cleavage in either 5'- to 3'- or 3'- to 5'-direction to yield nucleoside 5'-phosphates.. Functionally, bidirectionally degrades single-stranded DNA into large acid-insoluble oligonucleotides, which are then degraded further into small acid-soluble oligonucleotides. This Bordetella avium (strain 197N) protein is Exodeoxyribonuclease 7 large subunit.